The primary structure comprises 110 residues: DNA-binding protein Mlab_1482 (110 aa).

Belongs to the PDCD5 family.

The polypeptide is DNA-binding protein Mlab_1482 (Methanocorpusculum labreanum (strain ATCC 43576 / DSM 4855 / Z)).